A 431-amino-acid polypeptide reads, in one-letter code: Glutamate-1-semialdehyde 2,1-aminomutase 1 (431 aa).

K268 is subject to N6-(pyridoxal phosphate)lysine.

The protein belongs to the class-III pyridoxal-phosphate-dependent aminotransferase family. HemL subfamily. As to quaternary structure, homodimer. Requires pyridoxal 5'-phosphate as cofactor.

It localises to the cytoplasm. The catalysed reaction is (S)-4-amino-5-oxopentanoate = 5-aminolevulinate. It participates in porphyrin-containing compound metabolism; protoporphyrin-IX biosynthesis; 5-aminolevulinate from L-glutamyl-tRNA(Glu): step 2/2. This Anoxybacillus flavithermus (strain DSM 21510 / WK1) protein is Glutamate-1-semialdehyde 2,1-aminomutase 1.